The sequence spans 145 residues: D-aminoacyl-tRNA deacylase (145 aa).

The Gly-cisPro motif, important for rejection of L-amino acids signature appears at 137-138 (GP).

Belongs to the DTD family. In terms of assembly, homodimer.

The protein localises to the cytoplasm. It carries out the reaction glycyl-tRNA(Ala) + H2O = tRNA(Ala) + glycine + H(+). The catalysed reaction is a D-aminoacyl-tRNA + H2O = a tRNA + a D-alpha-amino acid + H(+). An aminoacyl-tRNA editing enzyme that deacylates mischarged D-aminoacyl-tRNAs. Also deacylates mischarged glycyl-tRNA(Ala), protecting cells against glycine mischarging by AlaRS. Acts via tRNA-based rather than protein-based catalysis; rejects L-amino acids rather than detecting D-amino acids in the active site. By recycling D-aminoacyl-tRNA to D-amino acids and free tRNA molecules, this enzyme counteracts the toxicity associated with the formation of D-aminoacyl-tRNA entities in vivo and helps enforce protein L-homochirality. This is D-aminoacyl-tRNA deacylase from Photobacterium profundum (strain SS9).